A 241-amino-acid chain; its full sequence is Probable GTP-binding protein EngB (241 aa).

The region spanning 56 to 240 (GPVEIAFAGR…RAAIALLLKE (185 aa)) is the EngB-type G domain. GTP contacts are provided by residues 64–71 (GRSNVGKS), 91–95 (GRTQE), 118–121 (DMPG), 185–188 (TKID), and 219–221 (TSS). 2 residues coordinate Mg(2+): Ser-71 and Thr-93.

It belongs to the TRAFAC class TrmE-Era-EngA-EngB-Septin-like GTPase superfamily. EngB GTPase family. Requires Mg(2+) as cofactor.

Necessary for normal cell division and for the maintenance of normal septation. In Brucella suis biovar 1 (strain 1330), this protein is Probable GTP-binding protein EngB.